Reading from the N-terminus, the 361-residue chain is D-alanine--D-alanine ligase (361 aa).

Positions 134 to 344 (KLLLKSFNIP…FKDLVDNLIN (211 aa)) constitute an ATP-grasp domain. Residue 167–222 (REALGYPVIVKPAVLGSSIGINVAYSENQIEFFIEEALKYDLTILIEKFIEAREIE) coordinates ATP. Residues Asp-297, Glu-311, and Asn-313 each coordinate Mg(2+).

This sequence belongs to the D-alanine--D-alanine ligase family. Mg(2+) serves as cofactor. Mn(2+) is required as a cofactor.

Its subcellular location is the cytoplasm. The enzyme catalyses 2 D-alanine + ATP = D-alanyl-D-alanine + ADP + phosphate + H(+). It functions in the pathway cell wall biogenesis; peptidoglycan biosynthesis. Functionally, cell wall formation. This chain is D-alanine--D-alanine ligase, found in Borrelia garinii subsp. bavariensis (strain ATCC BAA-2496 / DSM 23469 / PBi) (Borreliella bavariensis).